Consider the following 61-residue polypeptide: MKSGKASIKDLAVGKGKDLRWGKGLNAVGVFTDLEIGRQREMSAKSCSTPLYIRRSIQFKS.

This is an uncharacterized protein from Bacillus subtilis (strain 168).